Consider the following 765-residue polypeptide: Protein PAT1 homolog 1 (765 aa).

Disordered regions lie at residues 1–98 (MFRF…DERG), 119–147 (GVGS…LAGP), and 210–244 (LPNR…SPPV). Residues 7–30 (LDDDCTLEEEEGLVEEEDEIDQFN) are compositionally biased toward acidic residues. Basic and acidic residues predominate over residues 45–59 (EEHTRLAELDERVRD). A compositionally biased stretch (basic and acidic residues) spans 218 to 227 (SRDEGRDLSE). Ser-235 and Ser-236 each carry phosphoserine. Over residues 235–244 (SSPVIGSPPV) the composition is skewed to low complexity.

The protein belongs to the PAT1 family. In terms of assembly, interacts with ribonucleoprotein complex components.

It localises to the cytoplasm. Its subcellular location is the P-body. It is found in the nucleus. The protein resides in the PML body. The protein localises to the nucleus speckle. Its function is as follows. RNA-binding protein involved in deadenylation-dependent decapping of mRNAs, leading to the degradation of mRNAs. Acts as a scaffold protein that connects deadenylation and decapping machinery. Required for cytoplasmic mRNA processing body (P-body) assembly. This Danio rerio (Zebrafish) protein is Protein PAT1 homolog 1 (patl1).